The following is a 140-amino-acid chain: Alpha-lactalbumin (140 aa).

The signal sequence occupies residues 1–19 (MMSLLSLLLLGIALPATQA). Residues 20-140 (IDYRKCQASQ…CIEDLDQWRC (121 aa)) form the C-type lysozyme domain. 4 cysteine pairs are disulfide-bonded: C25/C140, C47/C131, C80/C96, and C92/C110. N63 carries an N-linked (GlcNAc...) asparagine glycan. The Ca(2+) site is built by K98, D101, D103, D106, and D107.

The protein belongs to the glycosyl hydrolase 22 family. Lactose synthase (LS) is a heterodimer of a catalytic component, beta1,4-galactosyltransferase (beta4Gal-T1) and a regulatory component, alpha-lactalbumin (LA). As to expression, mammary gland specific. Secreted in milk.

It is found in the secreted. In terms of biological role, regulatory subunit of lactose synthase, changes the substrate specificity of galactosyltransferase in the mammary gland making glucose a good acceptor substrate for this enzyme. This enables LS to synthesize lactose, the major carbohydrate component of milk. In other tissues, galactosyltransferase transfers galactose onto the N-acetylglucosamine of the oligosaccharide chains in glycoproteins. In Notamacropus eugenii (Tammar wallaby), this protein is Alpha-lactalbumin (LALBA).